The primary structure comprises 631 residues: tRNA uridine 5-carboxymethylaminomethyl modification enzyme MnmG (631 aa).

FAD is bound by residues 13–18, Val-125, and Ser-180; that span reads GGGHAG. Residue 273 to 287 coordinates NAD(+); that stretch reads GPRYCPSIEDKVNRY. Gln-370 contacts FAD.

This sequence belongs to the MnmG family. Homodimer. Heterotetramer of two MnmE and two MnmG subunits. Requires FAD as cofactor.

It is found in the cytoplasm. Its function is as follows. NAD-binding protein involved in the addition of a carboxymethylaminomethyl (cmnm) group at the wobble position (U34) of certain tRNAs, forming tRNA-cmnm(5)s(2)U34. The chain is tRNA uridine 5-carboxymethylaminomethyl modification enzyme MnmG from Alcanivorax borkumensis (strain ATCC 700651 / DSM 11573 / NCIMB 13689 / SK2).